Reading from the N-terminus, the 752-residue chain is Photosystem I P700 chlorophyll a apoprotein A1 (752 aa).

8 helical membrane passes run 73-96 (IFSAHFGQLAVIFLWISGMHFHGA), 159-182 (LYWIAIGGLIMSALMLFAGWFHYH), 198-222 (MNHHLAGLLGLGCLSWSGHQIHIAL), 294-312 (IAHHHLALSVLFIFAGHMY), 349-372 (WHAQLAINLAMMGSLSIIVAHHMY), 388-414 (LSLFTHHMWIGGFCVVGGAAHGAIFMV), 436-458 (AIISHLNWVCIFLGCHSFGLYIH), and 533-551 (FMVHHIHAFTIHVTVLILL). [4Fe-4S] cluster-binding residues include C575 and C584. 2 helical membrane-spanning segments follow: residues 591–612 (HVFLGLFWMYNSISVVIFHFSW) and 666–688 (SSAYGLIFLGAHFIWAFSLMFLF). H677 provides a ligand contact to chlorophyll a'. The chlorophyll a site is built by M685 and Y693. A phylloquinone-binding site is contributed by W694. A helical transmembrane segment spans residues 726 to 746 (AVGLAHYLLGGIGTTWSFFLA).

The protein belongs to the PsaA/PsaB family. The PsaA/B heterodimer binds the P700 chlorophyll special pair and subsequent electron acceptors. PSI consists of a core antenna complex that captures photons, and an electron transfer chain that converts photonic excitation into a charge separation. The eukaryotic PSI reaction center is composed of at least 11 subunits. P700 is a chlorophyll a/chlorophyll a' dimer, A0 is one or more chlorophyll a, A1 is one or both phylloquinones and FX is a shared 4Fe-4S iron-sulfur center. serves as cofactor.

The protein localises to the plastid. The protein resides in the chloroplast thylakoid membrane. The enzyme catalyses reduced [plastocyanin] + hnu + oxidized [2Fe-2S]-[ferredoxin] = oxidized [plastocyanin] + reduced [2Fe-2S]-[ferredoxin]. In terms of biological role, psaA and PsaB bind P700, the primary electron donor of photosystem I (PSI), as well as the electron acceptors A0, A1 and FX. PSI is a plastocyanin/cytochrome c6-ferredoxin oxidoreductase, converting photonic excitation into a charge separation, which transfers an electron from the donor P700 chlorophyll pair to the spectroscopically characterized acceptors A0, A1, FX, FA and FB in turn. Oxidized P700 is reduced on the lumenal side of the thylakoid membrane by plastocyanin or cytochrome c6. This chain is Photosystem I P700 chlorophyll a apoprotein A1, found in Trieres chinensis (Marine centric diatom).